A 231-amino-acid polypeptide reads, in one-letter code: Orotidine 5'-phosphate decarboxylase (231 aa).

Substrate is bound by residues aspartate 11, lysine 34, 61 to 70, threonine 117, arginine 179, glutamine 188, glycine 208, and arginine 209; that span reads DLKLHDIPNT. The active-site Proton donor is lysine 63.

The protein belongs to the OMP decarboxylase family. Type 1 subfamily. In terms of assembly, homodimer.

The enzyme catalyses orotidine 5'-phosphate + H(+) = UMP + CO2. It functions in the pathway pyrimidine metabolism; UMP biosynthesis via de novo pathway; UMP from orotate: step 2/2. Catalyzes the decarboxylation of orotidine 5'-monophosphate (OMP) to uridine 5'-monophosphate (UMP). The protein is Orotidine 5'-phosphate decarboxylase of Streptococcus suis (strain 98HAH33).